A 1340-amino-acid chain; its full sequence is DNA-directed RNA polymerase subunit beta (1340 aa).

Belongs to the RNA polymerase beta chain family. In terms of assembly, the RNAP catalytic core consists of 2 alpha, 1 beta, 1 beta' and 1 omega subunit. When a sigma factor is associated with the core the holoenzyme is formed, which can initiate transcription.

The catalysed reaction is RNA(n) + a ribonucleoside 5'-triphosphate = RNA(n+1) + diphosphate. Functionally, DNA-dependent RNA polymerase catalyzes the transcription of DNA into RNA using the four ribonucleoside triphosphates as substrates. The chain is DNA-directed RNA polymerase subunit beta from Baumannia cicadellinicola subsp. Homalodisca coagulata.